A 383-amino-acid chain; its full sequence is Acetylornithine deacetylase (383 aa).

Histidine 80 contacts Zn(2+). The active site involves aspartate 82. Aspartate 112 lines the Zn(2+) pocket. Glutamate 144 is a catalytic residue. Zn(2+) contacts are provided by glutamate 145, glutamate 169, and histidine 355.

It belongs to the peptidase M20A family. ArgE subfamily. As to quaternary structure, homodimer. Requires Zn(2+) as cofactor. It depends on Co(2+) as a cofactor. The cofactor is glutathione.

The protein resides in the cytoplasm. It carries out the reaction N(2)-acetyl-L-ornithine + H2O = L-ornithine + acetate. Its pathway is amino-acid biosynthesis; L-arginine biosynthesis; L-ornithine from N(2)-acetyl-L-ornithine (linear): step 1/1. Functionally, catalyzes the hydrolysis of the amide bond of N(2)-acetylated L-amino acids. Cleaves the acetyl group from N-acetyl-L-ornithine to form L-ornithine, an intermediate in L-arginine biosynthesis pathway, and a branchpoint in the synthesis of polyamines. The polypeptide is Acetylornithine deacetylase (Escherichia coli O8 (strain IAI1)).